A 488-amino-acid chain; its full sequence is Inosine-5'-monophosphate dehydrogenase (488 aa).

2 CBS domains span residues 95–153 (VITN…SIKI) and 157–213 (MTKE…PHAA). Residues aspartate 250 and 300–302 (GIG) each bind NAD(+). 2 residues coordinate K(+): glycine 302 and glycine 304. Residue serine 305 coordinates IMP. Cysteine 307 provides a ligand contact to K(+). Cysteine 307 (thioimidate intermediate) is an active-site residue. IMP is bound by residues 340-342 (DGG), 363-364 (GS), and 387-391 (YRGMG). Residue arginine 403 is the Proton acceptor of the active site. Residue glutamate 417 coordinates IMP. Residues 467–488 (AGLAESHPHNVQITKESPNYSF) are disordered. K(+)-binding residues include glutamate 471, serine 472, and histidine 473. The segment covering 475–488 (HNVQITKESPNYSF) has biased composition (polar residues).

This sequence belongs to the IMPDH/GMPR family. Homotetramer. K(+) serves as cofactor.

The enzyme catalyses IMP + NAD(+) + H2O = XMP + NADH + H(+). The protein operates within purine metabolism; XMP biosynthesis via de novo pathway; XMP from IMP: step 1/1. Its activity is regulated as follows. Mycophenolic acid (MPA) is a non-competitive inhibitor that prevents formation of the closed enzyme conformation by binding to the same site as the amobile flap. In contrast, mizoribine monophosphate (MZP) is a competitive inhibitor that induces the closed conformation. MPA is a potent inhibitor of mammalian IMPDHs but a poor inhibitor of the bacterial enzymes. MZP is a more potent inhibitor of bacterial IMPDH. In terms of biological role, catalyzes the conversion of inosine 5'-phosphate (IMP) to xanthosine 5'-phosphate (XMP), the first committed and rate-limiting step in the de novo synthesis of guanine nucleotides, and therefore plays an important role in the regulation of cell growth. The chain is Inosine-5'-monophosphate dehydrogenase from Staphylococcus haemolyticus (strain JCSC1435).